Reading from the N-terminus, the 298-residue chain is HTH-type transcriptional regulator ArgP (298 aa).

Positions 4 to 60 (VDYRWVAALDAVIAQRGFERAAEKLCITQSAVSQRIKQLEKLMAQPLLVREQPPRPT) constitute an HTH lysR-type domain. A DNA-binding region (H-T-H motif) is located at residues 21 to 40 (FERAAEKLCITQSAVSQRIK).

Belongs to the LysR transcriptional regulatory family. In terms of assembly, homodimer.

In terms of biological role, controls the transcription of genes involved in arginine and lysine metabolism. The chain is HTH-type transcriptional regulator ArgP from Photobacterium profundum (strain SS9).